Here is a 400-residue protein sequence, read N- to C-terminus: MLKVEMLSTGDEVLHGQIVDTNAAWLADFFFHQGLPLSRRNTVGDNLDDLVTILRERSQHADVLIVNGGLGPTSDDLSALAAATAKGEGLVLHEAWLKEMERYFHERGRVMAPSNRKQAELPASAEFINNPVGTACGFAVQLNRCLMFFTPGVPSEFKVMVEHEILPRLRERFSLPQPPVCLRLTTFGRSESDLAQSLDTLQLPPGVTMGYRSSMPIIELKLTGPASEQQAMEKLWLDVKRVAGQSVIFEGTEGLPAQISRELQNRQFSLTLSEQFTGGLLALQLSRAGAPLLACEVVPSQEETLAQTAHWITERRANHFAGLALAVSGFENEHLNFALATPDGTFALRVRFSTTRYSLAIRQEVCAMMALNMLRRWLNGQDIASEHGWIEVVESMTLSV.

This sequence belongs to the CinA family.

This is CinA-like protein from Escherichia coli (strain K12 / MC4100 / BW2952).